Consider the following 483-residue polypeptide: UDP-N-acetylmuramate--L-alanine ligase (483 aa).

128–134 (GTHGKTT) serves as a coordination point for ATP.

Belongs to the MurCDEF family.

It localises to the cytoplasm. It catalyses the reaction UDP-N-acetyl-alpha-D-muramate + L-alanine + ATP = UDP-N-acetyl-alpha-D-muramoyl-L-alanine + ADP + phosphate + H(+). It participates in cell wall biogenesis; peptidoglycan biosynthesis. Cell wall formation. This chain is UDP-N-acetylmuramate--L-alanine ligase, found in Shewanella violacea (strain JCM 10179 / CIP 106290 / LMG 19151 / DSS12).